A 127-amino-acid polypeptide reads, in one-letter code: Holo-[acyl-carrier-protein] synthase (127 aa).

The Mg(2+) site is built by D8 and E56.

Belongs to the P-Pant transferase superfamily. AcpS family. The cofactor is Mg(2+).

The protein resides in the cytoplasm. The catalysed reaction is apo-[ACP] + CoA = holo-[ACP] + adenosine 3',5'-bisphosphate + H(+). Functionally, transfers the 4'-phosphopantetheine moiety from coenzyme A to a Ser of acyl-carrier-protein. This is Holo-[acyl-carrier-protein] synthase from Cytophaga hutchinsonii (strain ATCC 33406 / DSM 1761 / CIP 103989 / NBRC 15051 / NCIMB 9469 / D465).